The chain runs to 429 residues: Glutamate-1-semialdehyde 2,1-aminomutase 1 (429 aa).

An N6-(pyridoxal phosphate)lysine modification is found at K268.

It belongs to the class-III pyridoxal-phosphate-dependent aminotransferase family. HemL subfamily. As to quaternary structure, homodimer. Pyridoxal 5'-phosphate is required as a cofactor.

It is found in the cytoplasm. The catalysed reaction is (S)-4-amino-5-oxopentanoate = 5-aminolevulinate. Its pathway is porphyrin-containing compound metabolism; protoporphyrin-IX biosynthesis; 5-aminolevulinate from L-glutamyl-tRNA(Glu): step 2/2. This chain is Glutamate-1-semialdehyde 2,1-aminomutase 1, found in Lysinibacillus sphaericus (strain C3-41).